The sequence spans 453 residues: Growth/differentiation factor 9 (453 aa).

Residues 1-27 (MALPNKFFLWFCCFAWLCFPISLDSLP) form the signal peptide. The propeptide occupies 28–318 (SRGEAQIVAR…EGVRSSRHRR (291 aa)). N-linked (GlcNAc...) asparagine glycosylation is found at N163, N236, N255, and N269. The tract at residues 282-328 (LHPKRKPSQGPDQRRELSAYPVGEEAAEGVRSSRHRRDQESVSSELK) is disordered. Residues 318–328 (RDQESVSSELK) show a composition bias toward basic and acidic residues. N337 is a glycosylation site (N-linked (GlcNAc...) asparagine). 3 cysteine pairs are disulfide-bonded: C352-C418, C381-C450, and C385-C452.

This sequence belongs to the TGF-beta family. In terms of assembly, homodimer or heterodimer (Potential). But, in contrast to other members of this family, cannot be disulfide-linked. In terms of processing, phosphorylated; phosphorylation is critical for GDF9 function.

Its subcellular location is the secreted. In terms of biological role, required for ovarian folliculogenesis. This is Growth/differentiation factor 9 (GDF9) from Capra hircus (Goat).